A 226-amino-acid chain; its full sequence is V-type proton ATPase subunit E 2 (226 aa).

It belongs to the V-ATPase E subunit family. V-ATPase is a heteromultimeric enzyme made up of two complexes: the ATP-hydrolytic V1 complex and the proton translocation V0 complex. The V1 complex consists of three catalytic AB heterodimers that form a heterohexamer, three peripheral stalks each consisting of EG heterodimers, one central rotor including subunits D and F, and the regulatory subunits C and H. The proton translocation complex V0 consists of the proton transport subunit a, a ring of proteolipid subunits c9c'', rotary subunit d, subunits e and f, and the accessory subunits ATP6AP1/Ac45 and ATP6AP2/PRR. In terms of tissue distribution, testis specific.

Its function is as follows. Subunit of the V1 complex of vacuolar(H+)-ATPase (V-ATPase), a multisubunit enzyme composed of a peripheral complex (V1) that hydrolyzes ATP and a membrane integral complex (V0) that translocates protons. V-ATPase is responsible for acidifying and maintaining the pH of intracellular compartments and in some cell types, is targeted to the plasma membrane, where it is responsible for acidifying the extracellular environment. The sequence is that of V-type proton ATPase subunit E 2 (Atp6v1e2) from Mus musculus (Mouse).